We begin with the raw amino-acid sequence, 671 residues long: DNA ligase (671 aa).

Residues 32-36 (DVEYD), 81-82 (SL), and Glu113 contribute to the NAD(+) site. The N6-AMP-lysine intermediate role is filled by Lys115. NAD(+) contacts are provided by Arg136, Glu173, Lys290, and Lys314. The Zn(2+) site is built by Cys408, Cys411, Cys426, and Cys432. In terms of domain architecture, BRCT spans 593–671 (EIDSPFAGKT…EAEMLRLLGS (79 aa)).

It belongs to the NAD-dependent DNA ligase family. LigA subfamily. It depends on Mg(2+) as a cofactor. Mn(2+) serves as cofactor.

It carries out the reaction NAD(+) + (deoxyribonucleotide)n-3'-hydroxyl + 5'-phospho-(deoxyribonucleotide)m = (deoxyribonucleotide)n+m + AMP + beta-nicotinamide D-nucleotide.. Functionally, DNA ligase that catalyzes the formation of phosphodiester linkages between 5'-phosphoryl and 3'-hydroxyl groups in double-stranded DNA using NAD as a coenzyme and as the energy source for the reaction. It is essential for DNA replication and repair of damaged DNA. In Escherichia coli O17:K52:H18 (strain UMN026 / ExPEC), this protein is DNA ligase.